The chain runs to 367 residues: WAT1-related protein At3g28050 (367 aa).

10 helical membrane-spanning segments follow: residues 10-30 (VLPV…NTLF), 40-60 (FHVF…PSLF), 73-93 (FSIL…NIMG), 103-123 (TLAS…AVVF), 142-162 (TVVS…VVIA), 179-199 (WILG…WYIV), 211-231 (FTVV…VTLF), 246-266 (IALV…NTIH), 276-296 (LFVA…GVIF), and 301-321 (LYIG…TVMW). EamA domains follow at residues 25 to 153 (GLNT…FIVT) and 195 to 319 (LWYI…FYTV). The segment at 338–367 (HEEANEADLDSPSGSQKAPLLESYKNDEHV) is disordered.

It belongs to the drug/metabolite transporter (DMT) superfamily. Plant drug/metabolite exporter (P-DME) (TC 2.A.7.4) family.

The protein localises to the membrane. In Arabidopsis thaliana (Mouse-ear cress), this protein is WAT1-related protein At3g28050.